Consider the following 609-residue polypeptide: Manganese lipoxygenase (609 aa).

The N-terminal stretch at 1–16 (MRLLLSIAGLTTVVNA) is a signal peptide. 4 N-linked (GlcNAc...) asparagine glycosylation sites follow: Asn-24, Asn-115, Asn-156, and Asn-193. In terms of domain architecture, Lipoxygenase spans 117–609 (SLKAIQDHGG…PGVIPFYLSV (493 aa)). The Mn(2+) site is built by His-289 and His-294. A glycan (N-linked (GlcNAc...) asparagine) is linked at Asn-385. Mn(2+) is bound by residues His-474 and Asn-478. Residue Asn-539 is glycosylated (N-linked (GlcNAc...) asparagine). Val-609 provides a ligand contact to Mn(2+).

The protein belongs to the lipoxygenase family. Manganese lipoxygenase subfamily. Requires Mn(2+) as cofactor. N- and O-glycosylated.

It is found in the secreted. The catalysed reaction is (9Z,12Z)-octadecadienoate + O2 = (9S)-hydroperoxy-(10E,12Z)-octadecadienoate. It carries out the reaction (9Z,12Z)-octadecadienoate + O2 = (11S)-hydroperoxy-(9Z,12Z)-octadecadienoate. It catalyses the reaction (9Z,12Z)-octadecadienoate + O2 = (13R)-hydroperoxy-(9Z,11E)-octadecadienoate. The enzyme catalyses (9Z,12Z,15Z)-octadecatrienoate + O2 = (11R)-hydroperoxy-(9Z,12Z,15Z)-octadecatrienoate. In terms of biological role, lipoxygenase that metabolizes linoleic and alpha-linolenic acids to 9-, 11- and 13-hydroperoxy fatty acids. Oxidizes linoleic acid to mainly 9S- and 13R-HPODE and alpha-linolenic acid to 11R-HPOTrE. This Colletotrichum gloeosporioides (strain Cg-14) (Anthracnose fungus) protein is Manganese lipoxygenase.